A 330-amino-acid chain; its full sequence is Taste receptor type 2 member 136 (330 aa).

The Extracellular portion of the chain corresponds to 1–32; that stretch reads MKSQPVTQELHFIFPLFKTISSDIMSFLVSIA. The chain crosses the membrane as a helical span at residues 33 to 53; the sequence is GIAMLAQIVLGTFANVFIVLV. Residues 54–73 are Cytoplasmic-facing; it reads TCTDCIRRRKLFLADGILTS. A helical transmembrane segment spans residues 74-94; that stretch reads LAFCRIGMLWVILISWCSIVF. Residues 95 to 122 are Extracellular-facing; the sequence is HQALSLQVRFSICVGWAVTNHFNMWLAT. A helical transmembrane segment spans residues 123 to 143; that stretch reads ILSILYLLKIGNFSNLIFLGL. The Cytoplasmic segment spans residues 144 to 149; sequence KRKIKS. A helical transmembrane segment spans residues 150 to 170; that stretch reads VFIVVLLASLVLLFPNLITVT. The Extracellular portion of the chain corresponds to 171–201; that stretch reads VCETVQANGYRGNLTGKTKRTYFMNLTAMIS. N-linked (GlcNAc...) asparagine glycosylation is found at Asn183 and Asn195. A helical transmembrane segment spans residues 202-222; sequence FTLDNIISFTISMVCFLLLIY. Residues 223–248 lie on the Cytoplasmic side of the membrane; that stretch reads SLCKHLRTMRLYGKGPHNPSASAHIK. Residues 249-269 traverse the membrane as a helical segment; sequence ALQAVISFLLLFSMFILSLII. Residues 270 to 283 lie on the Extracellular side of the membrane; that stretch reads SGYNYMKPLNEPVH. The helical transmembrane segment at 284-304 threads the bilayer; that stretch reads LICQLIGTLYPSSHSYVLLWG. At 305–330 the chain is on the cytoplasmic side; the sequence is NRRIKLAFVLAMVQVRARLWLKEEKP.

Belongs to the G-protein coupled receptor T2R family.

It is found in the membrane. Functionally, putative taste receptor which may play a role in the perception of bitterness. This Rattus norvegicus (Rat) protein is Taste receptor type 2 member 136.